An 81-amino-acid polypeptide reads, in one-letter code: ATP synthase subunit c, chloroplastic (81 aa).

2 helical membrane-spanning segments follow: residues P3–G23 and L57–A77.

It belongs to the ATPase C chain family. In terms of assembly, F-type ATPases have 2 components, F(1) - the catalytic core - and F(0) - the membrane proton channel. F(1) has five subunits: alpha(3), beta(3), gamma(1), delta(1), epsilon(1). F(0) has four main subunits: a(1), b(1), b'(1) and c(10-14). The alpha and beta chains form an alternating ring which encloses part of the gamma chain. F(1) is attached to F(0) by a central stalk formed by the gamma and epsilon chains, while a peripheral stalk is formed by the delta, b and b' chains.

It localises to the plastid. The protein localises to the chloroplast thylakoid membrane. Its function is as follows. F(1)F(0) ATP synthase produces ATP from ADP in the presence of a proton or sodium gradient. F-type ATPases consist of two structural domains, F(1) containing the extramembraneous catalytic core and F(0) containing the membrane proton channel, linked together by a central stalk and a peripheral stalk. During catalysis, ATP synthesis in the catalytic domain of F(1) is coupled via a rotary mechanism of the central stalk subunits to proton translocation. Key component of the F(0) channel; it plays a direct role in translocation across the membrane. A homomeric c-ring of between 10-14 subunits forms the central stalk rotor element with the F(1) delta and epsilon subunits. This chain is ATP synthase subunit c, chloroplastic, found in Pinus koraiensis (Korean pine).